A 353-amino-acid polypeptide reads, in one-letter code: Trans-enoyl reductase eqxC (353 aa).

NADP(+) is bound at residue 45–48; sequence VDTK. 131–138 lines the substrate pocket; it reads ISFMTTGL. Residues 166–169, 189–192, tyrosine 207, and 254–255 contribute to the NADP(+) site; these read SSAT, SPRN, and LE. Substrate is bound at residue 275 to 279; it reads GPQML. 344–345 is an NADP(+) binding site; it reads IS.

Belongs to the zinc-containing alcohol dehydrogenase family. In terms of assembly, monomer.

The catalysed reaction is L-serine + 7 malonyl-CoA + acetyl-CoA + 2 S-adenosyl-L-methionine + ATP + 8 NADPH + 11 H(+) = (5S)-3-[(2E,6R,8E,10E,12E)-2,6-dimethyltetradeca-2,8,10,12-tetraenoyl]-5-(hydroxymethyl)pyrrolidine-2,4-dione + AMP + 2 S-adenosyl-L-homocysteine + 7 CO2 + diphosphate + 8 NADP(+) + 8 CoA + 6 H2O. Its pathway is mycotoxin biosynthesis. Its function is as follows. Trans-enoyl reductase; part of the gene cluster that mediates the biosynthesis of equisetin, a trans-fused decalin-containing tetramic acid with antimicrobial activity. The PKS module of eqxS together with the enoylreductase eqxC catalyze the formation of the polyketide unit which is then conjugated to L-serine by the condensation domain of the eqxS NRPS module. Activity of the Dieckmann cyclase domain (RED) results in release of the Dieckmann product intermediate. Diels-Alderase eqx3 is involved in endo-selective Diels-Alder cycloaddition to form the decalin ring, leading to the production of N-desmethylequisetin also called trichosetin. Subsequent N-methylation is carried out by eqxD to give equisetin. The protein is Trans-enoyl reductase eqxC of Fusarium heterosporum.